The sequence spans 45 residues: Metallothionein-like protein 1C (45 aa).

This sequence belongs to the metallothionein superfamily. Type 15 family. In terms of tissue distribution, widely expressed at low levels.

Functionally, metallothioneins have a high content of cysteine residues that bind various heavy metals. Confers tolerance to cadmium (Cd) and plays a role in Cd and zinc (Zn) homeostasis. The sequence is that of Metallothionein-like protein 1C (MT1C) from Arabidopsis thaliana (Mouse-ear cress).